A 105-amino-acid chain; its full sequence is Large ribosomal subunit protein uL23 (105 aa).

This sequence belongs to the universal ribosomal protein uL23 family. Part of the 50S ribosomal subunit. Contacts protein L29, and trigger factor when it is bound to the ribosome.

One of the early assembly proteins it binds 23S rRNA. One of the proteins that surrounds the polypeptide exit tunnel on the outside of the ribosome. Forms the main docking site for trigger factor binding to the ribosome. This is Large ribosomal subunit protein uL23 from Janthinobacterium sp. (strain Marseille) (Minibacterium massiliensis).